A 348-amino-acid chain; its full sequence is D-alanine--D-alanine ligase (348 aa).

Positions 132-334 (KRVLESAGIA…YPDLIEKLVA (203 aa)) constitute an ATP-grasp domain. 162 to 217 (EEKLSYPVFTKPSNMGSSVGISKSDNQEELRASLDLAFKYDSRVLVEQGVTAREIE) lines the ATP pocket. Positions 288, 301, and 303 each coordinate Mg(2+).

This sequence belongs to the D-alanine--D-alanine ligase family. Mg(2+) is required as a cofactor. Mn(2+) serves as cofactor.

The protein localises to the cytoplasm. The catalysed reaction is 2 D-alanine + ATP = D-alanyl-D-alanine + ADP + phosphate + H(+). Its pathway is cell wall biogenesis; peptidoglycan biosynthesis. Cell wall formation. This Streptococcus gordonii (strain Challis / ATCC 35105 / BCRC 15272 / CH1 / DL1 / V288) protein is D-alanine--D-alanine ligase.